The chain runs to 158 residues: NAD(P)H-quinone oxidoreductase subunit J, chloroplastic (158 aa).

This sequence belongs to the complex I 30 kDa subunit family. As to quaternary structure, NDH is composed of at least 16 different subunits, 5 of which are encoded in the nucleus.

Its subcellular location is the plastid. The protein resides in the chloroplast thylakoid membrane. It catalyses the reaction a plastoquinone + NADH + (n+1) H(+)(in) = a plastoquinol + NAD(+) + n H(+)(out). It carries out the reaction a plastoquinone + NADPH + (n+1) H(+)(in) = a plastoquinol + NADP(+) + n H(+)(out). Its function is as follows. NDH shuttles electrons from NAD(P)H:plastoquinone, via FMN and iron-sulfur (Fe-S) centers, to quinones in the photosynthetic chain and possibly in a chloroplast respiratory chain. The immediate electron acceptor for the enzyme in this species is believed to be plastoquinone. Couples the redox reaction to proton translocation, and thus conserves the redox energy in a proton gradient. This Amborella trichopoda protein is NAD(P)H-quinone oxidoreductase subunit J, chloroplastic.